A 70-amino-acid polypeptide reads, in one-letter code: Large ribosomal subunit protein bL31 (70 aa).

The Zn(2+) site is built by Cys-16, Cys-18, Cys-37, and Cys-40.

This sequence belongs to the bacterial ribosomal protein bL31 family. Type A subfamily. In terms of assembly, part of the 50S ribosomal subunit. Zn(2+) is required as a cofactor.

Its function is as follows. Binds the 23S rRNA. In Shewanella denitrificans (strain OS217 / ATCC BAA-1090 / DSM 15013), this protein is Large ribosomal subunit protein bL31.